The following is a 219-amino-acid chain: Leucyl/phenylalanyl-tRNA--protein transferase (219 aa).

Belongs to the L/F-transferase family.

The protein resides in the cytoplasm. The enzyme catalyses N-terminal L-lysyl-[protein] + L-leucyl-tRNA(Leu) = N-terminal L-leucyl-L-lysyl-[protein] + tRNA(Leu) + H(+). It carries out the reaction N-terminal L-arginyl-[protein] + L-leucyl-tRNA(Leu) = N-terminal L-leucyl-L-arginyl-[protein] + tRNA(Leu) + H(+). The catalysed reaction is L-phenylalanyl-tRNA(Phe) + an N-terminal L-alpha-aminoacyl-[protein] = an N-terminal L-phenylalanyl-L-alpha-aminoacyl-[protein] + tRNA(Phe). Functionally, functions in the N-end rule pathway of protein degradation where it conjugates Leu, Phe and, less efficiently, Met from aminoacyl-tRNAs to the N-termini of proteins containing an N-terminal arginine or lysine. The protein is Leucyl/phenylalanyl-tRNA--protein transferase of Leptospira borgpetersenii serovar Hardjo-bovis (strain JB197).